The sequence spans 257 residues: Nickel import system ATP-binding protein NikD (257 aa).

Residues 4 to 245 (IDIQNLTIKN…HLHPYTERLI (242 aa)) enclose the ABC transporter domain. 37-44 (GESGAGKS) serves as a coordination point for ATP.

It belongs to the ABC transporter superfamily. The complex is composed of two ATP-binding proteins (NikD and NikE), two transmembrane proteins (NikB and NikC) and a solute-binding protein (NikA).

It is found in the cell membrane. It catalyses the reaction Ni(2+)(out) + ATP + H2O = Ni(2+)(in) + ADP + phosphate + H(+). In terms of biological role, part of the ABC transporter complex NikABCDE (Opp2) involved in nickel import. Probably responsible for energy coupling to the transport system. This Staphylococcus aureus (strain Mu50 / ATCC 700699) protein is Nickel import system ATP-binding protein NikD.